Reading from the N-terminus, the 930-residue chain is Isoleucine--tRNA ligase (930 aa).

The 'HIGH' region signature appears at 57 to 67; that stretch reads PYANGNIHVGH. L-isoleucyl-5'-AMP is bound at residue E554. The 'KMSKS' region motif lies at 595–599; sequence KMSKS. K598 lines the ATP pocket. Zn(2+) contacts are provided by C888, C891, C908, and C911.

It belongs to the class-I aminoacyl-tRNA synthetase family. IleS type 1 subfamily. As to quaternary structure, monomer. It depends on Zn(2+) as a cofactor.

The protein localises to the cytoplasm. The enzyme catalyses tRNA(Ile) + L-isoleucine + ATP = L-isoleucyl-tRNA(Ile) + AMP + diphosphate. Catalyzes the attachment of isoleucine to tRNA(Ile). As IleRS can inadvertently accommodate and process structurally similar amino acids such as valine, to avoid such errors it has two additional distinct tRNA(Ile)-dependent editing activities. One activity is designated as 'pretransfer' editing and involves the hydrolysis of activated Val-AMP. The other activity is designated 'posttransfer' editing and involves deacylation of mischarged Val-tRNA(Ile). The protein is Isoleucine--tRNA ligase of Streptococcus sanguinis (strain SK36).